Reading from the N-terminus, the 526-residue chain is ATP synthase subunit alpha (526 aa).

Residue 174-181 participates in ATP binding; that stretch reads GDRKTGKT. Basic and acidic residues predominate over residues 505–520; that stretch reads FEPARSEVKVETRPQE. Residues 505–526 are disordered; it reads FEPARSEVKVETRPQEEEGEEG.

Belongs to the ATPase alpha/beta chains family. As to quaternary structure, F-type ATPases have 2 components, CF(1) - the catalytic core - and CF(0) - the membrane proton channel. CF(1) has five subunits: alpha(3), beta(3), gamma(1), delta(1), epsilon(1). CF(0) has three main subunits: a(1), b(2) and c(9-12). The alpha and beta chains form an alternating ring which encloses part of the gamma chain. CF(1) is attached to CF(0) by a central stalk formed by the gamma and epsilon chains, while a peripheral stalk is formed by the delta and b chains.

Its subcellular location is the cell membrane. The enzyme catalyses ATP + H2O + 4 H(+)(in) = ADP + phosphate + 5 H(+)(out). In terms of biological role, produces ATP from ADP in the presence of a proton gradient across the membrane. The alpha chain is a regulatory subunit. This chain is ATP synthase subunit alpha, found in Rubrobacter xylanophilus (strain DSM 9941 / JCM 11954 / NBRC 16129 / PRD-1).